A 77-amino-acid chain; its full sequence is Acyl carrier protein (77 aa).

The Carrier domain maps to 1–76 (MDREQRIKEI…DVINYLNEKL (76 aa)). Residue Ser-36 is modified to O-(pantetheine 4'-phosphoryl)serine.

Belongs to the acyl carrier protein (ACP) family. 4'-phosphopantetheine is transferred from CoA to a specific serine of apo-ACP by AcpS. This modification is essential for activity because fatty acids are bound in thioester linkage to the sulfhydryl of the prosthetic group.

It localises to the cytoplasm. The protein operates within lipid metabolism; fatty acid biosynthesis. In terms of biological role, carrier of the growing fatty acid chain in fatty acid biosynthesis. The chain is Acyl carrier protein from Hydrogenobaculum sp. (strain Y04AAS1).